Reading from the N-terminus, the 423-residue chain is D-tagatose-1,6-bisphosphate aldolase subunit GatZ (423 aa).

Belongs to the GatZ/KbaZ family. GatZ subfamily. As to quaternary structure, forms a complex with GatY.

It participates in carbohydrate metabolism; D-tagatose 6-phosphate degradation; D-glyceraldehyde 3-phosphate and glycerone phosphate from D-tagatose 6-phosphate: step 2/2. Its function is as follows. Component of the tagatose-1,6-bisphosphate aldolase GatYZ that is required for full activity and stability of the Y subunit. Could have a chaperone-like function for the proper and stable folding of GatY. When expressed alone, GatZ does not show any aldolase activity. Is involved in the catabolism of galactitol. The chain is D-tagatose-1,6-bisphosphate aldolase subunit GatZ from Salmonella choleraesuis (strain SC-B67).